Reading from the N-terminus, the 381-residue chain is Lipopolysaccharide 1,2-N-acetylglucosaminetransferase (381 aa).

It belongs to the glycosyltransferase group 1 family. Glycosyltransferase 4 subfamily.

Its subcellular location is the cell inner membrane. It catalyses the reaction UDP-N-acetyl-alpha-D-glucosamine + [lipopolysaccharide] = UDP + N-acetyl-alpha-D-glucosaminyl-[lipopolysaccharide].. It functions in the pathway bacterial outer membrane biogenesis; LPS core biosynthesis. In terms of biological role, transferase involved in the biosynthesis of the core oligosaccharide region of lipopolysaccharide (LPS). Catalyzes the addition of the terminal N-acetyl-D-glucosamine (GlcNAc) group to the outer-core glucose II, the last step of the lipid A-core oligosaccharide biosynthesis. This is Lipopolysaccharide 1,2-N-acetylglucosaminetransferase from Salmonella typhimurium (strain LT2 / SGSC1412 / ATCC 700720).